A 309-amino-acid polypeptide reads, in one-letter code: Ribonuclease Z (309 aa).

Zn(2+) contacts are provided by His-63, His-65, Asp-67, His-68, His-145, Asp-216, and His-274. The active-site Proton acceptor is Asp-67.

It belongs to the RNase Z family. In terms of assembly, homodimer. Zn(2+) is required as a cofactor.

The enzyme catalyses Endonucleolytic cleavage of RNA, removing extra 3' nucleotides from tRNA precursor, generating 3' termini of tRNAs. A 3'-hydroxy group is left at the tRNA terminus and a 5'-phosphoryl group is left at the trailer molecule.. Functionally, zinc phosphodiesterase, which displays some tRNA 3'-processing endonuclease activity. Probably involved in tRNA maturation, by removing a 3'-trailer from precursor tRNA. In Streptococcus mutans serotype c (strain ATCC 700610 / UA159), this protein is Ribonuclease Z.